The sequence spans 144 residues: Large ribosomal subunit protein uL13 (144 aa).

Belongs to the universal ribosomal protein uL13 family. As to quaternary structure, part of the 50S ribosomal subunit.

In terms of biological role, this protein is one of the early assembly proteins of the 50S ribosomal subunit, although it is not seen to bind rRNA by itself. It is important during the early stages of 50S assembly. The chain is Large ribosomal subunit protein uL13 from Mesomycoplasma hyopneumoniae (strain 7448) (Mycoplasma hyopneumoniae).